Reading from the N-terminus, the 76-residue chain is Protein CsbA (76 aa).

Over 1–5 (MITKA) the chain is Extracellular. A helical transmembrane segment spans residues 6–22 (VFALFFPFMLVVLFTRV). At 23 to 27 (TFNHY) the chain is on the cytoplasmic side. Residues 28 to 44 (VAIALTAALLFASYLKG) form a helical membrane-spanning segment. The Extracellular segment spans residues 45–49 (YTETY). The helical transmembrane segment at 50–66 (FIVGLDVVSLVAGGLYM) threads the bilayer. Residues 67-76 (AKKAAEKKEE) are Cytoplasmic-facing.

Its subcellular location is the cell membrane. This chain is Protein CsbA (csbA), found in Bacillus subtilis (strain 168).